A 1327-amino-acid chain; its full sequence is Myb-like protein O (1327 aa).

Positions 131 to 142 (NNNINTTNNNNK) are enriched in low complexity. Disordered stretches follow at residues 131–153 (NNNI…EESN), 263–390 (EEED…DESS), 504–668 (PPQQ…NHES), and 717–770 (KKKK…DNDD). The span at 263–283 (EEEDDEDYIPPEEEEDDDEDN) shows a compositional bias: acidic residues. A compositionally biased stretch (low complexity) spans 322-353 (YNNTANNINNNNIGDESDNNNNNNNNINNNSN). Residues 356–374 (DDDDDDDDDNNDDDDDDND) are compositionally biased toward acidic residues. The span at 511–532 (SSSSINSSNTMSSSSSSSSLSK) shows a compositional bias: low complexity. The segment covering 533-542 (NKLKKKKKEE) has biased composition (basic residues). Over residues 543–554 (KRKEEKRKEEKR) the composition is skewed to basic and acidic residues. Positions 555–577 (KEKKRKKRQSITISKFKKNKKKT) are enriched in basic residues. Over residues 585-606 (SESDSSSDDSDDSDFYYSDIEE) the composition is skewed to acidic residues. Positions 607–619 (GGGGNGNGSGSGV) are enriched in gly residues. Residues 624-633 (SDNEEGDSSS) are compositionally biased toward acidic residues. 2 stretches are compositionally biased toward low complexity: residues 646–668 (HTNN…NHES) and 722–732 (QSSSSSSSSTI). The segment covering 754-770 (NDDEDDNNNNNEDDNDD) has biased composition (acidic residues). The region spanning 897-953 (NVKLNQLKFTGGEDLLLLMGVKRFGTFNWRIIQKRYFPNKTDDQLFHRYKNLLSHSS) is the HTH myb-type domain. The H-T-H motif DNA-binding region spans 925–949 (WRIIQKRYFPNKTDDQLFHRYKNLL). Residues 959–1010 (KQYLNGAKFTKEEEEKLDGAIKIHGLKWDIISRDYLHWKEPAMLKKFYEKRE) form the Myb-like 1 domain. Low complexity-rich tracts occupy residues 1061 to 1118 (NSTN…NENN) and 1144 to 1160 (PIIE…ETSP). Disordered stretches follow at residues 1061–1122 (NSTN…YEFG) and 1144–1168 (PIIE…PCPI). A Myb-like 2 domain is found at 1268-1316 (KWTREEDRIILITVKEKGTVDNEIWKSLSDTKIQDKTPDQIMYRYLQLL).

Its subcellular location is the nucleus. This chain is Myb-like protein O (mybO), found in Dictyostelium discoideum (Social amoeba).